A 94-amino-acid polypeptide reads, in one-letter code: Conotoxin Qc6.1 (94 aa).

A signal peptide spans 1 to 22 (MKLTCMMIVALLFLTAWTFVTA). Residues 23 to 62 (VDSKNELENRGGWGQAGGWGKLFPMARDEMKNSEVSKLDN) constitute a propeptide that is removed on maturation. Cystine bridges form between C66–C84, C73–C88, and C83–C92.

The protein belongs to the conotoxin O1 superfamily. As to expression, expressed by the venom duct.

It is found in the secreted. This Conus quercinus (Oak cone) protein is Conotoxin Qc6.1.